A 427-amino-acid polypeptide reads, in one-letter code: 3-phosphoshikimate 1-carboxyvinyltransferase (427 aa).

K20, S21, and R25 together coordinate 3-phosphoshikimate. K20 is a phosphoenolpyruvate binding site. Phosphoenolpyruvate-binding residues include G92 and R120. S166, Q168, D312, and K339 together coordinate 3-phosphoshikimate. Phosphoenolpyruvate is bound at residue Q168. D312 functions as the Proton acceptor in the catalytic mechanism. Residues R343 and R385 each contribute to the phosphoenolpyruvate site.

It belongs to the EPSP synthase family. Monomer.

It localises to the cytoplasm. The enzyme catalyses 3-phosphoshikimate + phosphoenolpyruvate = 5-O-(1-carboxyvinyl)-3-phosphoshikimate + phosphate. It functions in the pathway metabolic intermediate biosynthesis; chorismate biosynthesis; chorismate from D-erythrose 4-phosphate and phosphoenolpyruvate: step 6/7. In terms of biological role, catalyzes the transfer of the enolpyruvyl moiety of phosphoenolpyruvate (PEP) to the 5-hydroxyl of shikimate-3-phosphate (S3P) to produce enolpyruvyl shikimate-3-phosphate and inorganic phosphate. This Streptococcus equi subsp. equi (strain 4047) protein is 3-phosphoshikimate 1-carboxyvinyltransferase.